The primary structure comprises 64 residues: MAARCAVCGKGPQTGFTVSHSHIRNKRTFRPNLQPVRTTIDGENVRVRVCVKCIKAGKVQRVEA.

The protein belongs to the bacterial ribosomal protein bL28 family.

In Bifidobacterium adolescentis (strain ATCC 15703 / DSM 20083 / NCTC 11814 / E194a), this protein is Large ribosomal subunit protein bL28.